Reading from the N-terminus, the 191-residue chain is RRP15-like protein (191 aa).

Positions 1 to 11 (MSTKNRDRLVV) are enriched in basic and acidic residues. The interval 1 to 52 (MSTKNRDRLVVTEDSDDDNEREEMSSGGESGEEGPSSVDGGAGDADETVAFP) is disordered. The stretch at 53–84 (AIERRKKKVIKKLTKKEQSLKKSVKEYRIKLA) forms a coiled coil. Residues 119 to 153 (QKTMSDAVKEKMTARERREARQRFDGKNFDSDRFA) show a composition bias toward basic and acidic residues. The tract at residues 119–191 (QKTMSDAVKE…IDTGNYSDED (73 aa)) is disordered. Over residues 166 to 191 (GEDDDGEDQMDIGEEQIDTGNYSDED) the composition is skewed to acidic residues.

This sequence belongs to the RRP15 family.

This chain is RRP15-like protein, found in Caenorhabditis elegans.